The chain runs to 521 residues: Bifunctional purine biosynthesis protein PurH (521 aa).

In terms of domain architecture, MGS-like spans 1–147; it reads MAKISRALIS…KNNADVTVLV (147 aa).

The protein belongs to the PurH family.

The enzyme catalyses (6R)-10-formyltetrahydrofolate + 5-amino-1-(5-phospho-beta-D-ribosyl)imidazole-4-carboxamide = 5-formamido-1-(5-phospho-D-ribosyl)imidazole-4-carboxamide + (6S)-5,6,7,8-tetrahydrofolate. The catalysed reaction is IMP + H2O = 5-formamido-1-(5-phospho-D-ribosyl)imidazole-4-carboxamide. It participates in purine metabolism; IMP biosynthesis via de novo pathway; 5-formamido-1-(5-phospho-D-ribosyl)imidazole-4-carboxamide from 5-amino-1-(5-phospho-D-ribosyl)imidazole-4-carboxamide (10-formyl THF route): step 1/1. The protein operates within purine metabolism; IMP biosynthesis via de novo pathway; IMP from 5-formamido-1-(5-phospho-D-ribosyl)imidazole-4-carboxamide: step 1/1. The protein is Bifunctional purine biosynthesis protein PurH of Geotalea daltonii (strain DSM 22248 / JCM 15807 / FRC-32) (Geobacter daltonii).